A 114-amino-acid polypeptide reads, in one-letter code: Large ribosomal subunit protein eL31 (114 aa).

It belongs to the eukaryotic ribosomal protein eL31 family.

This chain is Large ribosomal subunit protein eL31 (RPL31), found in Eremothecium gossypii (strain ATCC 10895 / CBS 109.51 / FGSC 9923 / NRRL Y-1056) (Yeast).